A 157-amino-acid chain; its full sequence is Peptide methionine sulfoxide reductase MsrA (157 aa).

C10 is an active-site residue.

Belongs to the MsrA Met sulfoxide reductase family.

It carries out the reaction L-methionyl-[protein] + [thioredoxin]-disulfide + H2O = L-methionyl-(S)-S-oxide-[protein] + [thioredoxin]-dithiol. The enzyme catalyses [thioredoxin]-disulfide + L-methionine + H2O = L-methionine (S)-S-oxide + [thioredoxin]-dithiol. Functionally, has an important function as a repair enzyme for proteins that have been inactivated by oxidation. Catalyzes the reversible oxidation-reduction of methionine sulfoxide in proteins to methionine. The polypeptide is Peptide methionine sulfoxide reductase MsrA (Clostridium perfringens (strain 13 / Type A)).